We begin with the raw amino-acid sequence, 91 residues long: Putative septation protein SpoVG (91 aa).

Belongs to the SpoVG family.

In terms of biological role, could be involved in septation. This is Putative septation protein SpoVG from Clostridium beijerinckii (strain ATCC 51743 / NCIMB 8052) (Clostridium acetobutylicum).